The following is an 834-amino-acid chain: MAVEEEGLRVFQSVKIKIGEAKNLPTYPGPNKMRDCYCTVNLDQEEVFRTKVVEKSLCPFYGEDFYCEIPRSFRHLSFYIFDRDVFRRDSIIGKVAIKKEDLQKYHNRDTWFQLQHVDADSEVQGKVHLELRLSEVITDSGVVCHKLATRILECQGLPIVNGQCDPYATVTLAGPCRSEAKKTKVKKKTNNPQFDEVFYFEVTRPCSYSRKSHFDFEDEDVDKLEIRVDLWNASNLKFGDEFLGELRVPLKVLRQSSPHEAWYFLQPRDNGSKSLKPGDLGSLRLNVVYTEDHVFSSDYYSPLRDLLLKSADVEPVSASAAHILGEVCREKQEAAIPLVRLFLHYGRVVPFISAIASAEVRRTQDPNTIFRGNSLTSKCIDETMKLAGMQYLHVTLKPTIEEICQSHKSCEIDPVRLKDGESLESNMENLRQFVDRVFSVITKSGVSCPTVMCDIFFSLREAAAKRFQDDLDVRYTAVSSFIFLRFFAPAILSPNLFQLTPHHTDPQTSRTLTLVSKTIQTLGSLSKSKSASFKESYMAAFYEFFNEQKYADAVKNFLDLISSSGRRDPKSVQQPILLKEGFMIKRAQGRKRFGMKNFKKRWFRLTNHEFTYQKSKGDPPLYSIPIENILAVEPLEEESFKMKNMFQVIQPERALYIQANNCVEAKAWIDILTKVSQCNQKRLAVYHPSAYLNGHWLCCRASSDTAAGCSPCTGGLPANIQLDIDGDRETERIYSLSSSYMSKLETMQEACGSRSVYDGPEQEEYSTFIIDDPQETYKTLKQVVAGVGALEQEHAQYKRDKFRRTKYGSQEHPIGDKSFQSYIRQQSETPAHSM.

2 consecutive C2 domains span residues 1–112 (MAVE…DTWF) and 123–263 (VQGK…EAWY). Ala-2 bears the N-acetylalanine mark. Tyr-66 is subject to Phosphotyrosine. A Phosphoserine modification is found at Ser-77. Thr-110 carries the phosphothreonine modification. The Ras-GAP domain maps to 346-561 (GRVVPFISAI…DAVKNFLDLI (216 aa)). Residues 576–677 (ILLKEGFMIK…WIDILTKVSQ (102 aa)) form the PH domain. The segment at 679–715 (NQKRLAVYHPSAYLNGHWLCCRASSDTAAGCSPCTGG) adopts a Btk-type zinc-finger fold. Zn(2+) contacts are provided by His-687, Cys-698, Cys-699, and Cys-709. A disordered region spans residues 806–834 (KYGSQEHPIGDKSFQSYIRQQSETPAHSM). Residues Ser-809 and Ser-833 each carry the phosphoserine modification. Over residues 818-834 (SFQSYIRQQSETPAHSM) the composition is skewed to polar residues.

In terms of biological role, inhibitory regulator of the Ras-cyclic AMP pathway. May bind inositol tetrakisphosphate (IP4). In Bos taurus (Bovine), this protein is Ras GTPase-activating protein 3 (RASA3).